The sequence spans 135 residues: Class I hydrophobin 15 (135 aa).

The first 21 residues, 1-21, serve as a signal peptide directing secretion; it reads MFAKSATIAIVLAALAGFSAA. Cystine bridges form between Cys50-Cys113, Cys57-Cys107, Cys58-Cys97, and Cys114-Cys127. Asn131 carries N-linked (GlcNAc...) asparagine glycosylation.

Belongs to the fungal hydrophobin family. Self-assembles to form functional amyloid fibrils called rodlets. Self-assembly into fibrillar rodlets occurs spontaneously at hydrophobic:hydrophilic interfaces and the rodlets further associate laterally to form amphipathic monolayers.

It localises to the secreted. The protein localises to the cell wall. In terms of biological role, aerial growth, conidiation, and dispersal of filamentous fungi in the environment rely upon a capability of their secreting small amphipathic proteins called hydrophobins (HPBs) with low sequence identity. Class I can self-assemble into an outermost layer of rodlet bundles on aerial cell surfaces, conferring cellular hydrophobicity that supports fungal growth, development and dispersal; whereas Class II form highly ordered films at water-air interfaces through intermolecular interactions but contribute nothing to the rodlet structure. This chain is Class I hydrophobin 15, found in Pleurotus ostreatus (strain PC15) (Oyster mushroom).